We begin with the raw amino-acid sequence, 263 residues long: Indolethylamine N-methyltransferase (263 aa).

Lys13 carries the post-translational modification N6-succinyllysine. S-adenosyl-L-methionine contacts are provided by residues Tyr20, Tyr25, Gly63, Tyr69, 85-87 (DFT), and Asn90. Lys96 is modified (N6-succinyllysine). S-adenosyl-L-methionine-binding positions include 142–143 (DV) and Leu163.

This sequence belongs to the class I-like SAM-binding methyltransferase superfamily. NNMT/PNMT/TEMT family. As to quaternary structure, monomer. As to expression, widely expressed. The highest levels were in thyroid, adrenal gland, adult and fetal lung. Intermediate levels in heart, placenta, skeletal muscle, testis, small intestine, pancreas, stomach, spinal cord, lymph node and trachea. Very low levels in adult and fetal kidney and liver, in adult spleen, thymus, ovary, colon and bone marrow. Not expressed in peripheral blood leukocytes and brain.

It is found in the cytoplasm. The catalysed reaction is a tertiary amine + S-adenosyl-L-methionine = a methylated tertiary amine + S-adenosyl-L-homocysteine + H(+). The enzyme catalyses a secondary amine + S-adenosyl-L-methionine = a methylated secondary amine + S-adenosyl-L-homocysteine + H(+). It catalyses the reaction a primary amine + S-adenosyl-L-methionine = a methylated primary amine + S-adenosyl-L-homocysteine + H(+). It carries out the reaction dimethyl sulfide + S-adenosyl-L-methionine = trimethylsulfonium + S-adenosyl-L-homocysteine. Functions as a thioether S-methyltransferase and is active with a variety of thioethers and the corresponding selenium and tellurium compounds, including 3-methylthiopropionaldehyde, dimethyl selenide, dimethyl telluride, 2-methylthioethylamine, 2-methylthioethanol, methyl-n-propyl sulfide and diethyl sulfide. Plays an important role in the detoxification of selenium compounds. Catalyzes the N-methylation of tryptamine and structurally related compounds. This is Indolethylamine N-methyltransferase (INMT) from Homo sapiens (Human).